The chain runs to 2156 residues: MAM and LDL-receptor class A domain-containing protein 1 (2156 aa).

Residues 1 to 31 (MLFFLDRMLAFPMNETFCCLWIACVFNSTLA) form the signal peptide. Residues 32–2076 (QQGTESFQCD…FTYAQNNTWT (2045 aa)) lie on the Vesicular side of the membrane. An LDL-receptor class A 1 domain is found at 33–68 (QGTESFQCDNGVSLPPDSICDFTDQCGDSSDERHCL). 2 cysteine pairs are disulfide-bonded: cysteine 40/cysteine 58 and cysteine 52/cysteine 67. 2 consecutive MAM domains span residues 71–229 (ERCD…GCLP) and 268–427 (QACG…ACGQ). One can recognise an LDL-receptor class A 2 domain in the interval 433-471 (LCSADEFPCTSGQCIAKESVCDSRQDCSDESDEDPATCS). Disulfide bonds link cysteine 434–cysteine 446, cysteine 441–cysteine 459, and cysteine 453–cysteine 470. MAM domains follow at residues 474–637 (LTCD…ECEI) and 652–816 (SKCD…NCTL). Asparagine 813 carries an N-linked (GlcNAc...) asparagine glycan. An LDL-receptor class A 3 domain is found at 822 to 860 (SCEGLDHFWCRHTRACIEKLRLCDLVDDCGDRTDEVNCA). Cystine bridges form between cysteine 823-cysteine 837, cysteine 831-cysteine 850, and cysteine 844-cysteine 859. The region spanning 863 to 1024 (LQCNFETGIC…DDLSFMDCTL (162 aa)) is the MAM 5 domain. Asparagine 1049 is a glycosylation site (N-linked (GlcNAc...) asparagine). Residues 1049-1086 (NCTDNEFICRSDGHCIEKMQKCDFKYDCPDKSDEASCV) enclose the LDL-receptor class A 4 domain. Intrachain disulfides connect cysteine 1050–cysteine 1063, cysteine 1057–cysteine 1076, and cysteine 1070–cysteine 1085. The region spanning 1088 to 1256 (EVCSFEKRSL…DDISFQDCSP (169 aa)) is the MAM 6 domain. Asparagine 1199 carries an N-linked (GlcNAc...) asparagine glycan. Residues 1263-1301 (KCTDHEFMCANKHCIAKDKLCDFVNDCADNSDETTFICR) form the LDL-receptor class A 5 domain. Disulfide bonds link cysteine 1264/cysteine 1276, cysteine 1271/cysteine 1289, and cysteine 1283/cysteine 1300. Positions 1305–1465 (GRCDFEFDLC…DIVLTENCLS (161 aa)) constitute an MAM 7 domain. N-linked (GlcNAc...) asparagine glycosylation occurs at asparagine 1414. Positions 1482–1518 (FCPLGYRECHNGKCYRLEQSCNFVDNCGDNTDENECG) constitute an LDL-receptor class A 6 domain. Cystine bridges form between cysteine 1483–cysteine 1495, cysteine 1490–cysteine 1508, and cysteine 1502–cysteine 1517. Residues 1519 to 1676 (SSCTFEKGWC…DDIEFKNCTT (158 aa)) form the MAM 8 domain. The LDL-receptor class A 7 domain maps to 1683–1720 (LCPEITDFLCRDKKCIASHLLCDYKPDCSDRSDEAHCA). Cystine bridges form between cysteine 1684/cysteine 1697, cysteine 1692/cysteine 1710, and cysteine 1704/cysteine 1719. The 166-residue stretch at 1727 to 1892 (GSCNFETSSG…DISFTPECVT (166 aa)) folds into the MAM 9 domain. 3 LDL-receptor class A domains span residues 1902–1939 (PCEADQFSCIYTLQCVPLSGKCDGHEDCIDGSDEMDCP), 1946–1982 (LCSNMEFPCSTDECIPSLLLCDGVPDCHFNEDELICS), and 1985–2023 (SCSNGALVCASSNSCIPAHQRCDGFADCMDFQLDESSCS). Cystine bridges form between cysteine 1903–cysteine 1916, cysteine 1910–cysteine 1929, cysteine 1923–cysteine 1938, cysteine 1947–cysteine 1959, cysteine 1954–cysteine 1972, cysteine 1966–cysteine 1981, cysteine 1986–cysteine 1999, cysteine 1993–cysteine 2012, cysteine 2006–cysteine 2022, cysteine 2025–cysteine 2036, cysteine 2030–cysteine 2045, and cysteine 2047–cysteine 2056. Residues 2024 to 2057 (ECPLNYCRNGGTCVVEKNGPMCRCRQGWKGNRCH) enclose the EGF-like domain. Residues 2077–2097 (LLGIGLAFLMTHITVAVLCFL) traverse the membrane as a helical segment. At 2098–2156 (ANRKVPIRKTEGSGNCAFVNPVYGNWSNPEKTESSVYSFSNPLYGTTSGSLETLSHHLK) the chain is on the cytoplasmic side.

In terms of assembly, interacts with FGF19. Strongly expressed in the small intestine.

Its subcellular location is the cytoplasmic vesicle membrane. Enhances production and/or transport of FGF19 and thus has a role in regulation of bile acid synthesis. This chain is MAM and LDL-receptor class A domain-containing protein 1, found in Homo sapiens (Human).